Consider the following 1512-residue polypeptide: Sterol 3-beta-glucosyltransferase (1512 aa).

Disordered stretches follow at residues 22–50 and 150–222; these read FSGS…YHSL and DEHT…DTDV. Over residues 156-169 the composition is skewed to acidic residues; sequence SEEEDSADKEEESI. Low complexity predominate over residues 190–222; that stretch reads TTATLITTQITRTKTATTATPTPTPTSSVDTDV. The GRAM 1 domain maps to 296–331; sequence LQRVFDLSDEDTFCGNYSAWLIKDVLLQGHVYLTKD. One can recognise a PH domain in the interval 359–520; sequence SIVYSGNLGL…WCNNITKLIF (162 aa). The GRAM 2 domain maps to 816–880; sequence RNFQSHFSTN…TDIEEVRASR (65 aa). 12 residues coordinate UDP-alpha-D-glucose: Ser1024, Arg1025, Asp1027, Asn1299, Ile1328, His1330, His1343, Ser1346, Gly1347, Thr1348, Asp1367, and Gln1368. Residues 1450 to 1512 form a disordered region; sequence YKRHHPVPSG…NNSPSQNSSN (63 aa). Over residues 1467–1493 the composition is skewed to acidic residues; the sequence is TDSDDYDDDEDDDESDKDDEEEEEENS. The span at 1501–1512 shows a compositional bias: polar residues; it reads GVNNSPSQNSSN.

It belongs to the glycosyltransferase 28 family.

It is found in the cytoplasm. The protein resides in the membrane. The enzyme catalyses a sterol + UDP-alpha-D-glucose = a sterol 3-beta-D-glucoside + UDP + H(+). It catalyses the reaction ergosterol + UDP-alpha-D-glucose = ergosteryl 3-beta-D-glucoside + UDP + H(+). In terms of biological role, sterol glycosyltransferase responsible for the glycosylation of ergosterol to form ergosterol-glucoside. The polypeptide is Sterol 3-beta-glucosyltransferase (Candida albicans (strain SC5314 / ATCC MYA-2876) (Yeast)).